Reading from the N-terminus, the 122-residue chain is Crustacean hyperglycemic hormones 7 (122 aa).

The signal sequence occupies residues 1–26 (MSLAMTAFRMMAVALVVVVASSTTWA). Cystine bridges form between Cys-55-Cys-91, Cys-71-Cys-87, and Cys-74-Cys-100. Position 120 is a valine amide (Val-120).

This sequence belongs to the arthropod CHH/MIH/GIH/VIH hormone family. In terms of tissue distribution, produced by the medulla terminalis X-organ in the eyestalks and transported to the sinus gland where they are stored and released.

Its subcellular location is the secreted. Its function is as follows. Hormone found in the sinus gland of isopods and decapods which controls the blood sugar level. Has a secretagogue action over the amylase released from the midgut gland. May act as a stress hormone and may be involved in the control of molting and reproduction. The sequence is that of Crustacean hyperglycemic hormones 7 from Penaeus japonicus (Kuruma prawn).